The sequence spans 158 residues: NADPH-dependent 7-cyano-7-deazaguanine reductase (158 aa).

Cys56 serves as the catalytic Thioimide intermediate. Asp63 serves as the catalytic Proton donor. Residues 78–80 and 97–98 contribute to the substrate site; these read VES and HE.

It belongs to the GTP cyclohydrolase I family. QueF type 1 subfamily.

The protein resides in the cytoplasm. It carries out the reaction 7-aminomethyl-7-carbaguanine + 2 NADP(+) = 7-cyano-7-deazaguanine + 2 NADPH + 3 H(+). It participates in tRNA modification; tRNA-queuosine biosynthesis. Catalyzes the NADPH-dependent reduction of 7-cyano-7-deazaguanine (preQ0) to 7-aminomethyl-7-deazaguanine (preQ1). In Rhodopseudomonas palustris (strain BisB5), this protein is NADPH-dependent 7-cyano-7-deazaguanine reductase.